We begin with the raw amino-acid sequence, 243 residues long: Segregation and condensation protein A (243 aa).

This sequence belongs to the ScpA family. Component of a cohesin-like complex composed of ScpA, ScpB and the Smc homodimer, in which ScpA and ScpB bind to the head domain of Smc. The presence of the three proteins is required for the association of the complex with DNA.

The protein localises to the cytoplasm. Its function is as follows. Participates in chromosomal partition during cell division. May act via the formation of a condensin-like complex containing Smc and ScpB that pull DNA away from mid-cell into both cell halves. This chain is Segregation and condensation protein A, found in Staphylococcus haemolyticus (strain JCSC1435).